Consider the following 230-residue polypeptide: uncharacterized protein (230 aa).

7 helical membrane passes run Ser8 to Phe28, Ser45 to Phe65, Leu72 to Leu92, Pro109 to Ser129, Ile141 to Ala161, Met176 to Phe196, and Ile203 to Phe223.

To P.aeruginosa PA0043 and M.thermoautotrophicum MTH1451.

The protein resides in the cell membrane. This is an uncharacterized protein from Aquifex aeolicus (strain VF5).